A 78-amino-acid polypeptide reads, in one-letter code: uncharacterized protein (78 aa).

2 helical membrane-spanning segments follow: residues 25 to 45 and 50 to 70; these read IITA…DEVV and KCAD…FVFV.

The protein localises to the membrane. This is an uncharacterized protein from Saccharomyces cerevisiae (strain ATCC 204508 / S288c) (Baker's yeast).